Here is a 156-residue protein sequence, read N- to C-terminus: SsrA-binding protein (156 aa).

This sequence belongs to the SmpB family.

The protein localises to the cytoplasm. In terms of biological role, required for rescue of stalled ribosomes mediated by trans-translation. Binds to transfer-messenger RNA (tmRNA), required for stable association of tmRNA with ribosomes. tmRNA and SmpB together mimic tRNA shape, replacing the anticodon stem-loop with SmpB. tmRNA is encoded by the ssrA gene; the 2 termini fold to resemble tRNA(Ala) and it encodes a 'tag peptide', a short internal open reading frame. During trans-translation Ala-aminoacylated tmRNA acts like a tRNA, entering the A-site of stalled ribosomes, displacing the stalled mRNA. The ribosome then switches to translate the ORF on the tmRNA; the nascent peptide is terminated with the 'tag peptide' encoded by the tmRNA and targeted for degradation. The ribosome is freed to recommence translation, which seems to be the essential function of trans-translation. The sequence is that of SsrA-binding protein from Staphylococcus carnosus (strain TM300).